The sequence spans 93 residues: Large ribosomal subunit protein uL23c (93 aa).

Belongs to the universal ribosomal protein uL23 family. In terms of assembly, part of the 50S ribosomal subunit.

The protein localises to the plastid. It is found in the chloroplast. Functionally, binds to 23S rRNA. This Adiantum capillus-veneris (Maidenhair fern) protein is Large ribosomal subunit protein uL23c (rpl23).